Consider the following 522-residue polypeptide: E3 ubiquitin-protein ligase DMA2 (522 aa).

Disordered stretches follow at residues 1-56 and 69-92; these read MYTP…RPAS and QNSQTASSSAAPDQRLFGTTPSNS. The span at 14 to 35 shows a compositional bias: low complexity; sequence APTSSMTSNSSSASNANTTSSS. The segment covering 36–49 has biased composition (polar residues); it reads GINPRNRASGTPSN. Phosphoserine is present on serine 206. Glycyl lysine isopeptide (Lys-Gly) (interchain with G-Cter in ubiquitin) cross-links involve residues lysine 211, lysine 256, lysine 258, lysine 288, lysine 310, lysine 333, lysine 343, lysine 346, lysine 366, lysine 406, lysine 412, and lysine 423. The FHA domain occupies 295–358; the sequence is LVIGRYTERV…SGTFLNHQRL (64 aa). The segment at 433-477 adopts an RING-type; atypical zinc-finger fold; it reads CSICLCKIKPCQAIFISPCAHSWHFRCVRRLVMLSYPQFVCPNCR.

This sequence belongs to the DMA1 family. In terms of processing, UBC4-dependent autoubiquitination occurs at Lys-211, Lys-258, Lys-288, Lys-310, Lys-333, Lys-343, Lys-346, Lys-366, Lys-406, Lys-412 and Lys-423. UBC13/MMS2-dependent autoubiquitination occurs at Lys-258, Lys-310, Lys-346 and Lys-366. Lys-211, Lys-256, Lys-288, Lys-310, Lys-343, Lys-258, Lys-366 and Lys-412 are also ubiquitinated in trans by DMA1 E3 ligase in association with UBC4.

Its subcellular location is the cytoplasm. It carries out the reaction S-ubiquitinyl-[E2 ubiquitin-conjugating enzyme]-L-cysteine + [acceptor protein]-L-lysine = [E2 ubiquitin-conjugating enzyme]-L-cysteine + N(6)-ubiquitinyl-[acceptor protein]-L-lysine.. Its function is as follows. E3 ubiquitin-protein ligase which functions in cell cycle retarding in conjunction with the UBC4 and UBC13/MMS2 complex, 2 E2 ubiquitin conjugating enzymes. Involved in nutritional control of the cell cycle. Required for proper spindle positioning, likely regulating septin ring deposition at the bud neck. The protein is E3 ubiquitin-protein ligase DMA2 (DMA2) of Saccharomyces cerevisiae (strain YJM789) (Baker's yeast).